The following is a 257-amino-acid chain: Imidazole glycerol phosphate synthase subunit HisF (257 aa).

Catalysis depends on residues D11 and D130.

Belongs to the HisA/HisF family. Heterodimer of HisH and HisF.

The protein localises to the cytoplasm. The catalysed reaction is 5-[(5-phospho-1-deoxy-D-ribulos-1-ylimino)methylamino]-1-(5-phospho-beta-D-ribosyl)imidazole-4-carboxamide + L-glutamine = D-erythro-1-(imidazol-4-yl)glycerol 3-phosphate + 5-amino-1-(5-phospho-beta-D-ribosyl)imidazole-4-carboxamide + L-glutamate + H(+). It participates in amino-acid biosynthesis; L-histidine biosynthesis; L-histidine from 5-phospho-alpha-D-ribose 1-diphosphate: step 5/9. Functionally, IGPS catalyzes the conversion of PRFAR and glutamine to IGP, AICAR and glutamate. The HisF subunit catalyzes the cyclization activity that produces IGP and AICAR from PRFAR using the ammonia provided by the HisH subunit. The polypeptide is Imidazole glycerol phosphate synthase subunit HisF (Aeromonas hydrophila subsp. hydrophila (strain ATCC 7966 / DSM 30187 / BCRC 13018 / CCUG 14551 / JCM 1027 / KCTC 2358 / NCIMB 9240 / NCTC 8049)).